The chain runs to 322 residues: Tetraacyldisaccharide 4'-kinase (322 aa).

Residue 54 to 61 (SVGGTGKT) coordinates ATP.

The protein belongs to the LpxK family.

The catalysed reaction is a lipid A disaccharide + ATP = a lipid IVA + ADP + H(+). Its pathway is glycolipid biosynthesis; lipid IV(A) biosynthesis; lipid IV(A) from (3R)-3-hydroxytetradecanoyl-[acyl-carrier-protein] and UDP-N-acetyl-alpha-D-glucosamine: step 6/6. In terms of biological role, transfers the gamma-phosphate of ATP to the 4'-position of a tetraacyldisaccharide 1-phosphate intermediate (termed DS-1-P) to form tetraacyldisaccharide 1,4'-bis-phosphate (lipid IVA). The protein is Tetraacyldisaccharide 4'-kinase of Francisella tularensis subsp. holarctica (strain FTNF002-00 / FTA).